The sequence spans 298 residues: Acetylglutamate kinase (298 aa).

Substrate-binding positions include 66-67 (GG), Arg-88, and Asn-193.

It belongs to the acetylglutamate kinase family. ArgB subfamily.

The protein resides in the cytoplasm. The enzyme catalyses N-acetyl-L-glutamate + ATP = N-acetyl-L-glutamyl 5-phosphate + ADP. It functions in the pathway amino-acid biosynthesis; L-arginine biosynthesis; N(2)-acetyl-L-ornithine from L-glutamate: step 2/4. Catalyzes the ATP-dependent phosphorylation of N-acetyl-L-glutamate. This Methanosphaera stadtmanae (strain ATCC 43021 / DSM 3091 / JCM 11832 / MCB-3) protein is Acetylglutamate kinase.